The sequence spans 311 residues: UDP-N-acetylenolpyruvoylglucosamine reductase (311 aa).

The FAD-binding PCMH-type domain maps to 29–191; the sequence is IGGKADIVLK…LSARLKLKPI (163 aa). The active site involves Arg172. Residue Ser223 is the Proton donor of the active site. Residue Glu299 is part of the active site.

Belongs to the MurB family. It depends on FAD as a cofactor.

It localises to the cytoplasm. It carries out the reaction UDP-N-acetyl-alpha-D-muramate + NADP(+) = UDP-N-acetyl-3-O-(1-carboxyvinyl)-alpha-D-glucosamine + NADPH + H(+). Its pathway is cell wall biogenesis; peptidoglycan biosynthesis. Its function is as follows. Cell wall formation. The protein is UDP-N-acetylenolpyruvoylglucosamine reductase of Chloroherpeton thalassium (strain ATCC 35110 / GB-78).